Consider the following 79-residue polypeptide: Large ribosomal subunit protein eL38 (79 aa).

This sequence belongs to the eukaryotic ribosomal protein eL38 family.

In Theileria parva (East coast fever infection agent), this protein is Large ribosomal subunit protein eL38 (RPL38).